A 225-amino-acid chain; its full sequence is Prohead protease (225 aa).

Catalysis depends on residues H65, S114, and E141.

It belongs to the HK97 prohead protease protein family. Cleaves itself autocatalytically to yield the mature form of the protease.

It localises to the virion. Protease involved in virion assembly and maturation. This Escherichia coli (Bacteriophage HK97) protein is Prohead protease (4).